A 498-amino-acid chain; its full sequence is ATP synthase subunit beta, chloroplastic (498 aa).

172–179 (GGAGVGKT) contributes to the ATP binding site.

The protein belongs to the ATPase alpha/beta chains family. As to quaternary structure, F-type ATPases have 2 components, CF(1) - the catalytic core - and CF(0) - the membrane proton channel. CF(1) has five subunits: alpha(3), beta(3), gamma(1), delta(1), epsilon(1). CF(0) has four main subunits: a(1), b(1), b'(1) and c(9-12).

The protein resides in the plastid. It localises to the chloroplast thylakoid membrane. The enzyme catalyses ATP + H2O + 4 H(+)(in) = ADP + phosphate + 5 H(+)(out). Its function is as follows. Produces ATP from ADP in the presence of a proton gradient across the membrane. The catalytic sites are hosted primarily by the beta subunits. This is ATP synthase subunit beta, chloroplastic from Nicotiana rustica (Aztec tobacco).